A 261-amino-acid polypeptide reads, in one-letter code: Carnitinyl-CoA dehydratase (261 aa).

Residue glutamate 111 is the Nucleophile of the active site. Glutamate 131 (proton acceptor) is an active-site residue.

Belongs to the enoyl-CoA hydratase/isomerase family.

It carries out the reaction (R)-carnitinyl-CoA = crotonobetainyl-CoA + H2O. It participates in amine and polyamine metabolism; carnitine metabolism. Functionally, catalyzes the reversible dehydration of L-carnitinyl-CoA to crotonobetainyl-CoA. The protein is Carnitinyl-CoA dehydratase of Salmonella typhi.